We begin with the raw amino-acid sequence, 676 residues long: UvrABC system protein B (676 aa).

One can recognise a Helicase ATP-binding domain in the interval Arg39–Arg424. Residue Gly52–Thr59 coordinates ATP. The Beta-hairpin motif lies at Tyr105–Ile128. Residues Gln441 to Ile604 enclose the Helicase C-terminal domain. The interval Lys611–Ser631 is disordered. The region spanning Glu629–Gln664 is the UVR domain.

It belongs to the UvrB family. Forms a heterotetramer with UvrA during the search for lesions. Interacts with UvrC in an incision complex.

The protein localises to the cytoplasm. Its function is as follows. The UvrABC repair system catalyzes the recognition and processing of DNA lesions. A damage recognition complex composed of 2 UvrA and 2 UvrB subunits scans DNA for abnormalities. Upon binding of the UvrA(2)B(2) complex to a putative damaged site, the DNA wraps around one UvrB monomer. DNA wrap is dependent on ATP binding by UvrB and probably causes local melting of the DNA helix, facilitating insertion of UvrB beta-hairpin between the DNA strands. Then UvrB probes one DNA strand for the presence of a lesion. If a lesion is found the UvrA subunits dissociate and the UvrB-DNA preincision complex is formed. This complex is subsequently bound by UvrC and the second UvrB is released. If no lesion is found, the DNA wraps around the other UvrB subunit that will check the other stand for damage. The polypeptide is UvrABC system protein B (Chlamydia muridarum (strain MoPn / Nigg)).